The sequence spans 1438 residues: Membrane-anchored lipid-binding protein YSP2 (1438 aa).

Basic and acidic residues predominate over residues 1 to 17 (MRDEATRKKRSFSDGHF). Disordered stretches follow at residues 1–97 (MRDE…SHTP), 174–194 (KVKH…NERP), 200–219 (QKDD…SAPN), 285–308 (QQQH…QNPN), 338–418 (TSGP…KVKF), 455–485 (DENN…LGPK), and 505–543 (SQSN…RYSS). Residues 1–1277 (MRDEATRKKR…SAFSMLQQVN (1277 aa)) lie on the Cytoplasmic side of the membrane. Ser-13 carries the post-translational modification Phosphoserine. Residues 18 to 29 (FKKLKLMSRKKQ) show a composition bias toward basic residues. The span at 30-44 (PVMERSKTTRTRKES) shows a compositional bias: basic and acidic residues. The segment covering 45–58 (TNSAAKSSLSLRRA) has biased composition (low complexity). A compositionally biased stretch (polar residues) spans 74-97 (IGSTNEGVAGNSGSNSPAQYSHTP). Composition is skewed to low complexity over residues 286 to 298 (QQHP…GPLP) and 374 to 398 (PTNT…ANSN). Ser-411 bears the Phosphoserine mark. Positions 455–470 (DENNTNNNPNASSTNL) are enriched in low complexity. The segment covering 471–485 (SHISKSNVNNNLGPK) has biased composition (polar residues). Ser-596 carries the post-translational modification Phosphoserine. The 69-residue stretch at 648-716 (EFHTLFKDCD…KEIVQIEKKT (69 aa)) folds into the GRAM domain. The tract at residues 777–843 (SSSAFFDDSD…LGPNKHSPTT (67 aa)) is disordered. Residues 783–800 (DDSDDNDDDGDLDDDDPD) show a composition bias toward acidic residues. A compositionally biased stretch (polar residues) spans 818-832 (NESNDLGKNQKSTNY). Residues 851-1018 (NDHLVIEANI…EIKKILSDED (168 aa)) enclose the VASt 1 domain. Ser-1032 is modified (phosphoserine). The VASt 2 domain occupies 1059-1225 (DDTVIDEKIN…DLKKIISNAS (167 aa)). The disordered stretch occupies residues 1225-1257 (SSTKKKSRRRGKTVNKRKSSPSTIKNEKNEENF). The span at 1227–1243 (TKKKSRRRGKTVNKRKS) shows a compositional bias: basic residues. A helical transmembrane segment spans residues 1278–1298 (ITSVQGIMTIISFFICLIFFF). Residues 1299 to 1438 (RLLFHSKNTS…DNTSATNQLL (140 aa)) are Lumenal-facing. N-linked (GlcNAc...) asparagine glycosylation is found at Asn-1306, Asn-1373, and Asn-1430.

Belongs to the YSP2 family.

Its subcellular location is the mitochondrion membrane. It is found in the endoplasmic reticulum membrane. Its function is as follows. Involved in induction of programmed cell death in response to reactive oxygen species (ROS). May be involved in sterol transfer between intracellular membranes. The protein is Membrane-anchored lipid-binding protein YSP2 of Saccharomyces cerevisiae (strain ATCC 204508 / S288c) (Baker's yeast).